The following is a 312-amino-acid chain: Glyoxylate/hydroxypyruvate reductase A (312 aa).

The active site involves Arg227. Residue His275 is the Proton donor of the active site.

It belongs to the D-isomer specific 2-hydroxyacid dehydrogenase family. GhrA subfamily.

Its subcellular location is the cytoplasm. The catalysed reaction is glycolate + NADP(+) = glyoxylate + NADPH + H(+). The enzyme catalyses (R)-glycerate + NAD(+) = 3-hydroxypyruvate + NADH + H(+). It catalyses the reaction (R)-glycerate + NADP(+) = 3-hydroxypyruvate + NADPH + H(+). In terms of biological role, catalyzes the NADPH-dependent reduction of glyoxylate and hydroxypyruvate into glycolate and glycerate, respectively. This chain is Glyoxylate/hydroxypyruvate reductase A, found in Escherichia coli O7:K1 (strain IAI39 / ExPEC).